The following is an 85-amino-acid chain: Small ribosomal subunit protein uS17 (85 aa).

Belongs to the universal ribosomal protein uS17 family. Part of the 30S ribosomal subunit.

In terms of biological role, one of the primary rRNA binding proteins, it binds specifically to the 5'-end of 16S ribosomal RNA. This chain is Small ribosomal subunit protein uS17, found in Mesoplasma florum (strain ATCC 33453 / NBRC 100688 / NCTC 11704 / L1) (Acholeplasma florum).